Reading from the N-terminus, the 418-residue chain is Putative methylthiotransferase jhp_0270 (418 aa).

The MTTase N-terminal domain occupies 2–110 (KKVYFKTFGC…INALLQEKKR (109 aa)). The [4Fe-4S] cluster site is built by C11, C45, C74, C144, C148, and C151. Positions 130 to 355 (FVGKTRAFIK…KDLIFHKNKA (226 aa)) constitute a Radical SAM core domain.

The protein belongs to the methylthiotransferase family. It depends on [4Fe-4S] cluster as a cofactor.

This is Putative methylthiotransferase jhp_0270 from Helicobacter pylori (strain J99 / ATCC 700824) (Campylobacter pylori J99).